The primary structure comprises 673 residues: Potassium voltage-gated channel subfamily KQT member 1 (673 aa).

2 disordered regions span residues 1-28 (MAAA…RGSA) and 61-80 (GPSS…LGPR). Topologically, residues 1–118 (MAAATSPPRA…YNFLERPTGW (118 aa)) are cytoplasmic. Ser-27 carries the phosphoserine modification. Over residues 66 to 75 (AAPAASPAAA) the composition is skewed to low complexity. Residues 119–140 (KCFVYHFAVFLIVLVCLIFSVL) form a helical membrane-spanning segment. Residues 141–151 (STIEQYVALAT) lie on the Extracellular side of the membrane. Residues 152-174 (GTLFWMEIVLVVFFGTEYAVRLW) traverse the membrane as a helical segment. The Cytoplasmic portion of the chain corresponds to 175-190 (SAGCRSKYVGIWGRLR). Residues 191 to 216 (FARKPISIIDLIVVVASMVVLCVGSK) traverse the membrane as a helical segment. The Extracellular segment spans residues 217–224 (GQVFATSA). A helical; Voltage-sensor membrane pass occupies residues 225–240 (IRGIRFLQILRMLHVD). The interval 236–244 (MLHVDRQGG) is interaction with KCNE3. At 241–258 (RQGGTWRLLGSVVFIHRQ) the chain is on the cytoplasmic side. Gln-242 lines the a 1,2-diacyl-sn-glycero-3-phospho-(1D-myo-inositol-4,5-bisphosphate) pocket. The helical transmembrane segment at 259–281 (ELITTLYIGFLGLIFSSYFVYLA) threads the bilayer. The Extracellular portion of the chain corresponds to 282–297 (EKDAVNESGQVEFGSY). N-linked (GlcNAc...) asparagine glycosylation occurs at Asn-287. An intramembrane region (pore-forming) is located at residues 298-318 (ADALWWGVVTVTTIGYGDKVP). The Extracellular portion of the chain corresponds to 319–320 (QT). Residues 321–346 (WVGKTIASCFSVFAISFFALPAGILG) traverse the membrane as a helical segment. The Cytoplasmic portion of the chain corresponds to 347 to 673 (SGFALKVQQK…VPGRGPEEGS (327 aa)). The interval 368 to 380 (AAASLIQTAWRCY) is interaction with CALM. Residues Ser-405 and Ser-407 each carry the phosphoserine modification. The interaction with CALM; calcium-dependent stretch occupies residues 514–528 (KVIRRMQYFVAKKKF). The tract at residues 534-571 (PYDVRDVIEQYSQGHLNLMVRIKELQRRLDQSIGRPAL) is interaction with KCNE1 C-terminus. Residues 587-615 (IGARLNRVEDKVTQLDQRLELITDMLQQL) are interaction with AKAP9. The C-terminal assembly domain (tetramerization) stretch occupies residues 588-619 (GARLNRVEDKVTQLDQRLELITDMLQQLLSLH). A disordered region spans residues 619-673 (HRGGTPGSRAPGGGGAQVAQPCSGGSINPELFLPSNALPTYEQLTVPGRGPEEGS). The segment covering 622–634 (GTPGSRAPGGGGA) has biased composition (gly residues).

The protein belongs to the potassium channel family. KQT (TC 1.A.1.15) subfamily. Kv7.1/KCNQ1 sub-subfamily. In terms of assembly, tetramer. Heterotetramer with KCNE1; targets to the membrane raft. Interacts (via C-terminus) with CALM; forms a heterooctameric structure (with 4:4 KCNQ1:CALM stoichiometry) in a calcium-independent manner. Interacts with AKAP9; targets protein kinase A (PKA) catalytic and regulatory subunits and protein phosphatase 1 (PP1) to the KCNQ1-KCNE1 complex, allowing PKA-mediated phosphorylation and increase of delayed rectifier potassium channel activity. Interacts with KCNE2; form a heterooligomer complex that targets to the membrane raft and leading to currents with an apparently instantaneous activation, a rapid deactivation process and a linear current-voltage relationship and decreases the amplitude of the outward current. Interacts with AP2M1; mediates estrogen-induced internalization via clathrin-coated vesicles. Interacts with NEDD4L; promotes internalization and decreases I(Ks) currents. Interacts with USP2; counteracts the NEDD4L-specific down-regulation of I(Ks) and restore plasma membrane localization. Heterotetramer with KCNQ5; has a voltage-gated potassium channel activity. Interacts with KCNE3; four KCNE3 molecules are bound to one KCNQ1 tetramer (4:4 KCNQ1:KCNE3 stoichiometry); alters membrane raft localization; affects KCNQ1 structure and gating properties. Interacts with KCNE4; impairs KCNQ1 localization in lipid rafts and inhibits voltage-gated potassium channel activity. Interacts with KCNE5; impairs KCNQ1 localization in lipid rafts and only conducts current upon strong and continued depolarization. Interacts with SLC5A3; forms coregulatory channel-transporter complexes that modulate Na(+)-coupled myo-inositol influx through the transporter. In terms of processing, ubiquitinated by NEDD4L; promotes internalization. The ubiquitinylated form is internalized through a clathrin-mediated endocytosis by interacting with AP2M1 and is recycled back to the cell membrane via RAB4A and RAB11A. Deubiquitinated by USP2; counteracts the NEDD4L-specific down-regulation of I(Ks) and restores the membrane localization.

The protein resides in the cell membrane. Its subcellular location is the cytoplasmic vesicle membrane. It is found in the early endosome. The protein localises to the membrane raft. It localises to the endoplasmic reticulum. The protein resides in the basolateral cell membrane. Its subcellular location is the apical cell membrane. It carries out the reaction K(+)(in) = K(+)(out). With respect to regulation, PIP2 molecule is essential to activate KCNQ channels by inducing the coupling of the voltage-sensing domain (VSD) and the pore-forming domain (PD). Upon channel activation, PIP2 disrupts the VSD-calmodulin/CALM interactions, causing the release of CALM from the VSD which triggers the opening of the gate. Calcium potentiates KCNQ1 channel current through calcium-bound CALM. Calcium-bound CALM competes with PIP2 to stabilize the channel open state. In terms of biological role, pore-forming subunit of the voltage-gated potassium (Kv) channel involved in the regulation of cardiomyocyte excitability and important in normal development and functions of myocardium, inner ear, stomach and colon. Associates with KCNE beta subunits that modulates current kinetics. Induces a voltage-dependent by rapidly activating and slowly deactivating potassium-selective outward current. Also promotes a delayed voltage activated potassium current showing outward rectification characteristic. During beta-adrenergic receptor stimulation participates in cardiac repolarization by associating with KCNE1 to form the I(Ks) cardiac potassium current that increases the amplitude and slows down the activation kinetics of outward potassium current I(Ks). Muscarinic agonist oxotremorine-M strongly suppresses KCNQ1/KCNE1 current. When associated with KCNE3, forms the potassium channel that is important for cyclic AMP-stimulated intestinal secretion of chloride ions. This interaction with KCNE3 is reduced by 17beta-estradiol, resulting in the reduction of currents. During conditions of increased substrate load, maintains the driving force for proximal tubular and intestinal sodium ions absorption, gastric acid secretion, and cAMP-induced jejunal chloride ions secretion. Allows the provision of potassium ions to the luminal membrane of the secretory canaliculus in the resting state as well as during stimulated acid secretion. When associated with KCNE2, forms a heterooligomer complex leading to currents with an apparently instantaneous activation, a rapid deactivation process and a linear current-voltage relationship and decreases the amplitude of the outward current. When associated with KCNE4, inhibits voltage-gated potassium channel activity. When associated with KCNE5, this complex only conducts current upon strong and continued depolarization. Also forms a heterotetramer with KCNQ5 that has a voltage-gated potassium channel activity. Binds with phosphatidylinositol 4,5-bisphosphate. KCNQ1-KCNE2 channel associates with Na(+)-coupled myo-inositol symporter in the apical membrane of choroid plexus epithelium and regulates the myo-inositol gradient between blood and cerebrospinal fluid with an impact on neuron excitability. The chain is Potassium voltage-gated channel subfamily KQT member 1 from Sus scrofa (Pig).